The sequence spans 204 residues: Ras-related protein Rab-7L1 (204 aa).

GTP contacts are provided by Ser33, Lys34, His35, Tyr36, Lys37, and Thr39. Positions 36–44 (YKSTVGVDF) match the Effector region motif. Thr71 is subject to Phosphothreonine; by LRRK2. Residue Ser72 is modified to Phosphoserine. The GTP site is built by Lys126, Val156, and Lys157. 2 S-geranylgeranyl cysteine lipidation sites follow: Cys203 and Cys204.

It belongs to the small GTPase superfamily. Rab family. As to quaternary structure, interacts with LRRK2 (via the N-terminus); this interaction is direct and stimulates kinase activity.

The protein resides in the cell membrane. Its subcellular location is the cytoplasm. It is found in the perinuclear region. The protein localises to the golgi apparatus. It localises to the golgi apparatus membrane. The protein resides in the trans-Golgi network. Its subcellular location is the cytoskeleton. The small GTPases Rab are key regulators in vesicle trafficking. Essential for maintaining the integrity of endosome-trans-Golgi network structure. Together with LRRK2, plays a role in the retrograde trafficking pathway for recycling proteins, such as mannose 6 phosphate receptor (M6PR), between lysosomes and the Golgi apparatus in a retromer-dependent manner. Recruits LRRK2 to the Golgi apparatus and stimulates LRRK2 kinase activity. Stimulates phosphorylation of RAB10 'Thr-73' by LRRK2. Also regulates neuronal process morphology in the intact central nervous system (CNS). This is Ras-related protein Rab-7L1 (Rab29) from Mus musculus (Mouse).